Consider the following 419-residue polypeptide: UDP-N-acetylglucosamine 1-carboxyvinyltransferase (419 aa).

22–23 contacts phosphoenolpyruvate; sequence KN. Arginine 95 is a UDP-N-acetyl-alpha-D-glucosamine binding site. Residue cysteine 119 is the Proton donor of the active site. Cysteine 119 carries the 2-(S-cysteinyl)pyruvic acid O-phosphothioketal modification. UDP-N-acetyl-alpha-D-glucosamine is bound by residues 164-167, aspartate 308, and isoleucine 330; that span reads KVSV.

Belongs to the EPSP synthase family. MurA subfamily.

The protein localises to the cytoplasm. It catalyses the reaction phosphoenolpyruvate + UDP-N-acetyl-alpha-D-glucosamine = UDP-N-acetyl-3-O-(1-carboxyvinyl)-alpha-D-glucosamine + phosphate. It functions in the pathway cell wall biogenesis; peptidoglycan biosynthesis. Cell wall formation. Adds enolpyruvyl to UDP-N-acetylglucosamine. This chain is UDP-N-acetylglucosamine 1-carboxyvinyltransferase, found in Rickettsia massiliae (strain Mtu5).